The sequence spans 431 residues: REST corepressor 1 (431 aa).

The segment covering 1-10 has biased composition (basic and acidic residues); the sequence is MIEKGAEISG. The interval 1–53 is disordered; sequence MIEKGAEISGKRRGRNNAANSKSLGTNVNGSNSWEEGSSSSSSDDEPGGGGMR. Polar residues predominate over residues 17–28; it reads NAANSKSLGTNV. A compositionally biased stretch (low complexity) spans 29 to 42; it reads NGSNSWEEGSSSSS. An ELM2 domain is found at 50-135; that stretch reads GGMRVGLQYQ…KSLADLLNFT (86 aa). The 52-residue stretch at 136–187 folds into the SANT 1 domain; it reads PFPDEWTVEDRVLFEQAFSFHGKTFHRIQQMLPDKSIASLVKFYYSWKKTRS. The tract at residues 190–262 is disordered; the sequence is SVMDRHARKQ…NRAKRKPPNG (73 aa). Residues 224 to 242 show a composition bias toward basic and acidic residues; that stretch reads EQPKEAKKEVPKNDTVPHI. Residues 267–314 are a coiled coil; that stretch reads QEDVEAVSANANAATTVLRQLDMELVSIKRQIQNIKQTNSAFKEKLQG. Residues 327–378 enclose the SANT 2 domain; sequence KFNARWTTEEQLLAVQAIRMYGRDFQAISDVIGNKSVVQVKNFFVNYRRRFN.

The protein belongs to the CoREST family. Component of a BHC histone deacetylase complex that contains KDM1A. Expressed in territories in which neurogenesis takes place.

The protein resides in the nucleus. Its function is as follows. Essential component of the BHC complex, a corepressor complex that represses transcription of neuron-specific genes in non-neuronal cells. The BHC complex is recruited at RE1/NRSE sites by REST and acts by deacetylating and demethylating specific sites on histones, thereby acting as a chromatin modifier. In the BHC complex, it serves as a molecular beacon for the recruitment of molecular machinery that imposes silencing across a chromosomal interval. Plays a central role in demethylation of Lys-4 of histone H3 by promoting demethylase activity of KDM1A on core histones and nucleosomal substrates. This chain is REST corepressor 1 (rcor1), found in Xenopus laevis (African clawed frog).